Consider the following 622-residue polypeptide: Chaperone protein HscA homolog (622 aa).

The protein belongs to the heat shock protein 70 family.

Chaperone involved in the maturation of iron-sulfur cluster-containing proteins. Has a low intrinsic ATPase activity which is markedly stimulated by HscB. The sequence is that of Chaperone protein HscA homolog from Aromatoleum aromaticum (strain DSM 19018 / LMG 30748 / EbN1) (Azoarcus sp. (strain EbN1)).